The following is a 678-amino-acid chain: MDPSLIKVVNQLQEAFSTVGVQNLIDLPQITVVRSQSSGKSSVLENIVGRDFLPRGTGIVTRRPLVLQLINRPSASGKNEETTTDSDGKDQNNSSEWGEFLHLPGQKFFEFEKIREEIVRETEEKTGKNVGISSVPIYLRIYSPHVLTLTLVDLPGLTKVPVGDQPRDIEKQIREMVLKYISKNNAIILAVNAANTDLANSDGLKLAREVDPEGLRTIGVLTKVDLMDKGTDVVDILAGRVIPLRLGYVPVINRGQKDIEGKKSIRIALEAERNFFETHPSYGSKAQYCGTPFLARKLNMILMHHIRNTLPEIKVRINAALAKYQAELHSLGDTPVGDNSSIVLNLITDFCNEYRTVVDGRSEELSATELSGGARIAFVFHEIFSNGIQAIDPFDEVKDSDIRTILYNSSGPSPSLFMGTAAFEVIVKQQIKRLEDPSLKCVSLIYDELVRILNQLLQRPIFKRYPLLKDEFYKVVIGFFRKCMQPTNTLVMDMVAMEGSYINTVHPDFLSGHQAMAIVQSQNSKPIPVDPKTGKALTNNPVPPVETSSSSGQNFFGSFFGSKNKKRLAAMEPPPPVLRASTTLSDREKTDTEVIKLLIMSYFNIVKRTLADMVPKSISLKMIKYSKEHIQHELLEQLYKSQAFDKLLQESEVTVQRRKECEQMVESLLQASEIVSNV.

One can recognise a Dynamin-type G domain in the interval 24–311 (LIDLPQITVV…LMHHIRNTLP (288 aa)). Positions 34-41 (RSQSSGKS) are G1 motif. Position 34–41 (34–41 (RSQSSGKS)) interacts with GTP. The segment at 60-62 (VTR) is G2 motif. Residues 71 to 96 (NRPSASGKNEETTTDSDGKDQNNSSE) are disordered. Basic and acidic residues predominate over residues 78–90 (KNEETTTDSDGKD). Positions 153-156 (DLPG) are G3 motif. Residues 153-157 (DLPGL) and 222-225 (TKVD) contribute to the GTP site. Residues 222-225 (TKVD) are G4 motif. The tract at residues 252-255 (INRG) is G5 motif. Residues 592–678 (TEVIKLLIMS…LQASEIVSNV (87 aa)) enclose the GED domain.

This sequence belongs to the TRAFAC class dynamin-like GTPase superfamily. Dynamin/Fzo/YdjA family.

This chain is Vacuolar protein sorting-associated protein 1 (vps1), found in Schizosaccharomyces pombe (strain 972 / ATCC 24843) (Fission yeast).